The following is a 371-amino-acid chain: Queuine tRNA-ribosyltransferase (371 aa).

D93 acts as the Proton acceptor in catalysis. Substrate is bound by residues 93-97, D147, Q191, and G218; that span reads DSGGF. Positions 249–255 are RNA binding; sequence GVGTPLD. D268 (nucleophile) is an active-site residue. An RNA binding; important for wobble base 34 recognition region spans residues 273 to 277; sequence TRNAR. Zn(2+) contacts are provided by C306, C308, C311, and H337.

The protein belongs to the queuine tRNA-ribosyltransferase family. In terms of assembly, homodimer. Within each dimer, one monomer is responsible for RNA recognition and catalysis, while the other monomer binds to the replacement base PreQ1. Zn(2+) is required as a cofactor.

It carries out the reaction 7-aminomethyl-7-carbaguanine + guanosine(34) in tRNA = 7-aminomethyl-7-carbaguanosine(34) in tRNA + guanine. It functions in the pathway tRNA modification; tRNA-queuosine biosynthesis. In terms of biological role, catalyzes the base-exchange of a guanine (G) residue with the queuine precursor 7-aminomethyl-7-deazaguanine (PreQ1) at position 34 (anticodon wobble position) in tRNAs with GU(N) anticodons (tRNA-Asp, -Asn, -His and -Tyr). Catalysis occurs through a double-displacement mechanism. The nucleophile active site attacks the C1' of nucleotide 34 to detach the guanine base from the RNA, forming a covalent enzyme-RNA intermediate. The proton acceptor active site deprotonates the incoming PreQ1, allowing a nucleophilic attack on the C1' of the ribose to form the product. After dissociation, two additional enzymatic reactions on the tRNA convert PreQ1 to queuine (Q), resulting in the hypermodified nucleoside queuosine (7-(((4,5-cis-dihydroxy-2-cyclopenten-1-yl)amino)methyl)-7-deazaguanosine). In Lawsonia intracellularis (strain PHE/MN1-00), this protein is Queuine tRNA-ribosyltransferase.